Here is a 300-residue protein sequence, read N- to C-terminus: Transcription termination/antitermination protein NusG (300 aa).

The tract at residues 1 to 99 (MSDPNVNDAI…EAEEPELDPI (99 aa)) is disordered. 2 stretches are compositionally biased toward acidic residues: residues 14–41 (ESVEDELGTVEGADNEDTEASAEAEAAD) and 47–97 (ETDE…PELD).

This sequence belongs to the NusG family.

Functionally, participates in transcription elongation, termination and antitermination. The chain is Transcription termination/antitermination protein NusG from Streptomyces coelicolor (strain ATCC BAA-471 / A3(2) / M145).